Consider the following 820-residue polypeptide: Leucine--tRNA ligase (820 aa).

Residues 42-52 (PYPSGDLHMGH) carry the 'HIGH' region motif. The 'KMSKS' region motif lies at 576-580 (KMSKS). Lysine 579 contacts ATP.

This sequence belongs to the class-I aminoacyl-tRNA synthetase family.

It localises to the cytoplasm. It carries out the reaction tRNA(Leu) + L-leucine + ATP = L-leucyl-tRNA(Leu) + AMP + diphosphate. The chain is Leucine--tRNA ligase from Coxiella burnetii (strain CbuG_Q212) (Coxiella burnetii (strain Q212)).